The sequence spans 158 residues: uncharacterized protein (158 aa).

Positions 1-19 are cleaved as a signal peptide; sequence MQKLLLAVLFFSLLAIATA. The tract at residues 82 to 158 is disordered; that stretch reads ANPKAEAEPG…VYENDDENEE (77 aa). Over residues 84–107 the composition is skewed to basic and acidic residues; sequence PKAEAEPGSLDKEAGTKGEKEKNG. Positions 141–158 are enriched in acidic residues; sequence DDDDDHDDVYENDDENEE.

In terms of tissue distribution, prismatic layer of shell (at protein level). Expressed primarily in the mantle with highest level in the mantle edge and lower level in the mantle pallium.

Its subcellular location is the secreted. This is an uncharacterized protein from Pinctada maxima (Silver-lipped pearl oyster).